Here is a 171-residue protein sequence, read N- to C-terminus: 3-hydroxydecanoyl-[acyl-carrier-protein] dehydratase (171 aa).

His-71 is an active-site residue.

The protein belongs to the thioester dehydratase family. FabA subfamily. In terms of assembly, homodimer.

Its subcellular location is the cytoplasm. It carries out the reaction a (3R)-hydroxyacyl-[ACP] = a (2E)-enoyl-[ACP] + H2O. The catalysed reaction is (3R)-hydroxydecanoyl-[ACP] = (2E)-decenoyl-[ACP] + H2O. It catalyses the reaction (2E)-decenoyl-[ACP] = (3Z)-decenoyl-[ACP]. Its pathway is lipid metabolism; fatty acid biosynthesis. Functionally, necessary for the introduction of cis unsaturation into fatty acids. Catalyzes the dehydration of (3R)-3-hydroxydecanoyl-ACP to E-(2)-decenoyl-ACP and then its isomerization to Z-(3)-decenoyl-ACP. Can catalyze the dehydratase reaction for beta-hydroxyacyl-ACPs with saturated chain lengths up to 16:0, being most active on intermediate chain length. This is 3-hydroxydecanoyl-[acyl-carrier-protein] dehydratase from Sinorhizobium fredii (strain NBRC 101917 / NGR234).